We begin with the raw amino-acid sequence, 268 residues long: Undecaprenyl-diphosphatase (268 aa).

The next 7 membrane-spanning stretches (helical) occupy residues 41-61 (LAYS…LIYF), 81-101 (WLTY…PLYM), 106-126 (YLLL…AVIF), 146-166 (MTLG…LPGI), 191-211 (FVLV…SEGG), 213-233 (VATP…LVTI), and 245-265 (VTLV…TRIL).

The protein belongs to the UppP family.

The protein resides in the cell membrane. It carries out the reaction di-trans,octa-cis-undecaprenyl diphosphate + H2O = di-trans,octa-cis-undecaprenyl phosphate + phosphate + H(+). Its function is as follows. Catalyzes the dephosphorylation of undecaprenyl diphosphate (UPP). This is Undecaprenyl-diphosphatase from Pyrobaculum islandicum (strain DSM 4184 / JCM 9189 / GEO3).